The chain runs to 319 residues: Acetyl esterase (319 aa).

The Involved in the stabilization of the negatively charged intermediate by the formation of the oxyanion hole motif lies at 91 to 93 (HGG). Active-site residues include Ser165, Asp262, and His292.

The protein belongs to the 'GDXG' lipolytic enzyme family. As to quaternary structure, homodimer. Interacts with MalT and MelA.

Its subcellular location is the cytoplasm. Displays esterase activity towards short chain fatty esters (acyl chain length of up to 8 carbons). Able to hydrolyze triacetylglycerol (triacetin) and tributyrylglycerol (tributyrin), but not trioleylglycerol (triolein) or cholesterol oleate. Negatively regulates MalT activity by antagonizing maltotriose binding. Inhibits MelA galactosidase activity. The sequence is that of Acetyl esterase from Escherichia coli O45:K1 (strain S88 / ExPEC).